A 164-amino-acid polypeptide reads, in one-letter code: Large ribosomal subunit protein uL23 (164 aa).

Residues 1–41 (MPAKAASAAASKKNSAPKSAVSKKVAKKGAPAAAAKPTKVV) form a disordered region.

The protein belongs to the universal ribosomal protein uL23 family.

Functionally, this protein binds to a specific region on the 26S rRNA. The polypeptide is Large ribosomal subunit protein uL23 (RPL23A) (Trypanosoma brucei brucei).